The chain runs to 1067 residues: SURP and G-patch domain-containing protein 2 (1067 aa).

Ser93 carries the phosphoserine modification. Residues 177-189 (KESRDYDLDHPGE) show a composition bias toward basic and acidic residues. Positions 177–199 (KESRDYDLDHPGEVDSVSRSSGQ) are disordered. Position 206 is a phosphoserine (Ser206). Residue Lys219 forms a Glycyl lysine isopeptide (Lys-Gly) (interchain with G-Cter in SUMO2) linkage. Phosphothreonine is present on Thr265. A phosphoserine mark is found at Ser267 and Ser586. Residues 573 to 616 (IDQLVMRVIQGRLSPRERTLLLQDPAYWFLSDESSLEYKYYKLK) form an SURP motif 1 repeat. The interval 668 to 767 (SQGPRGLKAK…CPSANMDAKT (100 aa)) is disordered. Residues 680 to 691 (TTAQQTSLSSGT) are compositionally biased toward polar residues. Ser740 bears the Phosphoserine mark. Thr744 is modified (phosphothreonine). Residues 770–813 (TAEKLARFVAQVGPEIEQFSIENSTDNPDLWFLHDQSSSAFKFY) form an SURP motif 2 repeat. Residues 825 to 840 (SFQSTGEAGDSVQSPT) show a composition bias toward polar residues. Disordered regions lie at residues 825–944 (SFQS…KSLK) and 967–991 (RIAY…EFSQ). Residue Ser838 is modified to Phosphoserine. Residues 843–856 (KEGKGEPQEGHPEQ) show a composition bias toward basic and acidic residues. The span at 866-883 (LPEEEEEDEEESEDEGGE) shows a compositional bias: acidic residues. The span at 919 to 931 (ASTPGLSQASSGS) shows a compositional bias: polar residues. The span at 975–984 (GRPIAKKKKP) shows a compositional bias: basic residues. Residues 980 to 985 (KKKKPK) carry the Nuclear localization signal motif. The 47-residue stretch at 996-1042 (DKNVGFQMLQKMGWKEGHGLGSLGKGIREPVSVGALSEGEGLGADGP) folds into the G-patch domain.

Its subcellular location is the nucleus. Functionally, may play a role in mRNA splicing. This chain is SURP and G-patch domain-containing protein 2 (Sugp2), found in Mus musculus (Mouse).